We begin with the raw amino-acid sequence, 141 residues long: Large ribosomal subunit protein uL11 (141 aa).

This sequence belongs to the universal ribosomal protein uL11 family. As to quaternary structure, part of the ribosomal stalk of the 50S ribosomal subunit. Interacts with L10 and the large rRNA to form the base of the stalk. L10 forms an elongated spine to which L12 dimers bind in a sequential fashion forming a multimeric L10(L12)X complex. Post-translationally, one or more lysine residues are methylated.

In terms of biological role, forms part of the ribosomal stalk which helps the ribosome interact with GTP-bound translation factors. The polypeptide is Large ribosomal subunit protein uL11 (Clostridium perfringens (strain ATCC 13124 / DSM 756 / JCM 1290 / NCIMB 6125 / NCTC 8237 / Type A)).